The following is a 161-amino-acid chain: Transcriptional repressor NrdR (161 aa).

Over residues 1 to 11 (MRCPSCNSLDT) the composition is skewed to polar residues. The disordered stretch occupies residues 1-20 (MRCPSCNSLDTQVKDSRPTE). The segment at 3–34 (CPSCNSLDTQVKDSRPTEDSSVIRRRRVCVTC) is a zinc-finger region. Residues 49-139 (LTVIKRNGRR…VYRNFREAKD (91 aa)) form the ATP-cone domain.

It belongs to the NrdR family. Zn(2+) serves as cofactor.

In terms of biological role, negatively regulates transcription of bacterial ribonucleotide reductase nrd genes and operons by binding to NrdR-boxes. In Bradyrhizobium sp. (strain ORS 278), this protein is Transcriptional repressor NrdR.